Reading from the N-terminus, the 608-residue chain is Phosphogluconate dehydratase (608 aa).

Cys-154 and Cys-221 together coordinate [4Fe-4S] cluster.

The protein belongs to the IlvD/Edd family. [4Fe-4S] cluster serves as cofactor.

It carries out the reaction 6-phospho-D-gluconate = 2-dehydro-3-deoxy-6-phospho-D-gluconate + H2O. Its pathway is carbohydrate metabolism; Entner-Doudoroff pathway. Its function is as follows. Catalyzes the dehydration of 6-phospho-D-gluconate to 2-dehydro-3-deoxy-6-phospho-D-gluconate. The chain is Phosphogluconate dehydratase from Helicobacter pylori (strain J99 / ATCC 700824) (Campylobacter pylori J99).